The primary structure comprises 377 residues: MSSSSPAGTARTIRKKVYDASLKAMFTLRPERIHGIIADGLGVLQMATPVNRAMGRVIGVNDPVLSQEVFGVTFPRPLGLAAGFDKNATAADTWTALGFGYAELGTVTASPQAGNPTPRLFRLPADRAILNRMGFNNAGAADVADNLRRRKSRDVIGINIGKTKVVPAEQAVDDYRRSASLLGDLADYLVVNVSSPNTPGLRDLQAVESLRPILAAVQESTSVPVLVKIAPDLSDEDVDAVADLAVELGLAGIVATNTTISREGLVTPAHEVAEMGAGGISGPPVAERALEVLRRLHARVGDQLVLIGVGGISTPEQAWERIAAGATLLQGYTGFIYGGPDWIRDIHLGLAEQVKAHGLSNISEAVGSGLPWKDSAV.

FMN is bound by residues 82-86 (AGFDK) and Thr-106. Lys-86 is a substrate binding site. Position 131–135 (131–135 (NRMGF)) interacts with substrate. Residues Asn-159 and Asn-192 each contribute to the FMN site. Asn-192 is a binding site for substrate. Ser-195 acts as the Nucleophile in catalysis. Asn-197 contacts substrate. FMN contacts are provided by Lys-228 and Thr-256. A substrate-binding site is contributed by 257 to 258 (NT). Residues Gly-282, Gly-311, and 332–333 (YT) each bind FMN.

This sequence belongs to the dihydroorotate dehydrogenase family. Type 2 subfamily. Monomer. FMN serves as cofactor.

The protein localises to the cell membrane. It catalyses the reaction (S)-dihydroorotate + a quinone = orotate + a quinol. Its pathway is pyrimidine metabolism; UMP biosynthesis via de novo pathway; orotate from (S)-dihydroorotate (quinone route): step 1/1. Its function is as follows. Catalyzes the conversion of dihydroorotate to orotate with quinone as electron acceptor. This chain is Dihydroorotate dehydrogenase (quinone), found in Corynebacterium efficiens (strain DSM 44549 / YS-314 / AJ 12310 / JCM 11189 / NBRC 100395).